The primary structure comprises 88 residues: MGSVMMKIRVMPSDVDVDLNEVLEKIKNIQMEGVEIRDSAIQPIAFGLKAIVLMAVMPDMEGIGDRYIEEIGKIEGVESVEIEDMELL.

It belongs to the EF-1-beta/EF-1-delta family.

In terms of biological role, promotes the exchange of GDP for GTP in EF-1-alpha/GDP, thus allowing the regeneration of EF-1-alpha/GTP that could then be used to form the ternary complex EF-1-alpha/GTP/AAtRNA. This Archaeoglobus fulgidus (strain ATCC 49558 / DSM 4304 / JCM 9628 / NBRC 100126 / VC-16) protein is Elongation factor 1-beta (ef1b).